Here is a 383-residue protein sequence, read N- to C-terminus: Putative glutamate--cysteine ligase 2-1 (383 aa).

The protein belongs to the glutamate--cysteine ligase type 2 family. YbdK subfamily.

The catalysed reaction is L-cysteine + L-glutamate + ATP = gamma-L-glutamyl-L-cysteine + ADP + phosphate + H(+). Functionally, ATP-dependent carboxylate-amine ligase which exhibits weak glutamate--cysteine ligase activity. The chain is Putative glutamate--cysteine ligase 2-1 from Nocardia farcinica (strain IFM 10152).